Reading from the N-terminus, the 524-residue chain is GMP synthase [glutamine-hydrolyzing] (524 aa).

Residues 9-207 (RILILDFGSQ…VIHICQCIPN (199 aa)) form the Glutamine amidotransferase type-1 domain. C86 (nucleophile) is an active-site residue. Catalysis depends on residues H181 and E183. One can recognise a GMPS ATP-PPase domain in the interval 208–399 (WTTKHIIEDS…LGLPADLIYR (192 aa)). 235–241 (SGGVDSA) is a binding site for ATP.

Homodimer.

The catalysed reaction is XMP + L-glutamine + ATP + H2O = GMP + L-glutamate + AMP + diphosphate + 2 H(+). It participates in purine metabolism; GMP biosynthesis; GMP from XMP (L-Gln route): step 1/1. Its function is as follows. Catalyzes the synthesis of GMP from XMP. This chain is GMP synthase [glutamine-hydrolyzing], found in Coxiella burnetii (strain CbuG_Q212) (Coxiella burnetii (strain Q212)).